Reading from the N-terminus, the 402-residue chain is Multidrug resistance protein MdtH (402 aa).

Topologically, residues 1–12 are cytoplasmic; that stretch reads MSRVSQARNLGK. The chain crosses the membrane as a helical span at residues 13–33; sequence YFLLIDNMLVVLGFFVVFPLI. Residues 34 to 98 lie on the Periplasmic side of the membrane; it reads SIRFVDQMGW…GFATMGIAHE (65 aa). Residues 99–116 form a helical membrane-spanning segment; the sequence is PWLLWFSCFLSGLGGTLF. At 117 to 138 the chain is on the cytoplasmic side; sequence DPPRSALVVKLIRPEQRGRFFS. A helical transmembrane segment spans residues 139-159; the sequence is LLMMQDSAGAVIGALLGSWLL. At 160–164 the chain is on the periplasmic side; that stretch reads QYDFR. The helical transmembrane segment at 165 to 185 threads the bilayer; the sequence is LVCATGAILFILCALFNAWLL. Residues 186 to 213 are Cytoplasmic-facing; sequence PAWKLSTVRTPVREGMRRVMSDKRFVTY. The chain crosses the membrane as a helical span at residues 214-234; sequence VLTLAGYYMLAVQVMLMLPIM. At 235–243 the chain is on the periplasmic side; the sequence is VNDIAGSPA. A helical transmembrane segment spans residues 244-264; it reads AVKWMYAIEACLSLTLLYPIA. The Cytoplasmic segment spans residues 265–276; that stretch reads RWSEKRFRLEHR. The helical transmembrane segment at 277 to 297 threads the bilayer; the sequence is LMAGLLVMSLSMIPIGMVGNL. The Periplasmic portion of the chain corresponds to 298–299; sequence QQ. Residues 300 to 320 form a helical membrane-spanning segment; the sequence is LFTLICAFYIGSVIAEPARET. The Cytoplasmic portion of the chain corresponds to 321-339; it reads LSASLADARARGSYMGFSR. Residues 340–360 traverse the membrane as a helical segment; it reads LGLAIGGAIGYIGGGWLFDMG. Residues 361 to 367 lie on the Periplasmic side of the membrane; the sequence is KALTQPE. A helical membrane pass occupies residues 368–388; it reads LPWMMLGIIGFITFLALGWQF. The Cytoplasmic portion of the chain corresponds to 389 to 402; the sequence is SHKRTPRRMLEPGA.

It belongs to the major facilitator superfamily. DHA1 family. MdtH (TC 2.A.1.2.21) subfamily.

Its subcellular location is the cell inner membrane. The chain is Multidrug resistance protein MdtH from Salmonella paratyphi B (strain ATCC BAA-1250 / SPB7).